A 181-amino-acid polypeptide reads, in one-letter code: MTETTSAKPKKVSKPKAKPTHPPTSVMVMAAIKALKERNGSSLPAIKKYIAANYKVDVVKNAHFIKKALKSLVEKKKLVQTKGAGASGSFKLAAAAKAEKPKAVAKPKKAKTPKKKAAATKKPTGEKKAKTPKKKPAAKKPAAAKPKKAKTPKKKAAPAKKTPVKKVKKTSPKKKAAPKKK.

Disordered regions lie at residues 1 to 23 (MTET…THPP) and 81 to 181 (TKGA…PKKK). Positions 8-19 (KPKKVSKPKAKP) are enriched in basic residues. Residues 20-94 (THPPTSVMVM…GASGSFKLAA (75 aa)) enclose the H15 domain. Basic residues-rich tracts occupy residues 103-119 (AVAK…KAAA) and 145-181 (KPKK…PKKK).

Belongs to the histone H1/H5 family.

Its subcellular location is the nucleus. It localises to the chromosome. Its function is as follows. Histones H1 are necessary for the condensation of nucleosome chains into higher-order structures. The sequence is that of Histone H1 from Tigriopus californicus (Marine copepod).